A 368-amino-acid polypeptide reads, in one-letter code: Glutamate 5-kinase (368 aa).

Lys12 is an ATP binding site. 3 residues coordinate substrate: Ser52, Asp139, and Asn151. ATP-binding positions include 171-172 (SD) and 213-219 (TGGMKTK). One can recognise a PUA domain in the interval 277 to 354 (KGALIIDDGA…KEIEKLLGYI (78 aa)).

Belongs to the glutamate 5-kinase family.

The protein localises to the cytoplasm. It catalyses the reaction L-glutamate + ATP = L-glutamyl 5-phosphate + ADP. It functions in the pathway amino-acid biosynthesis; L-proline biosynthesis; L-glutamate 5-semialdehyde from L-glutamate: step 1/2. Functionally, catalyzes the transfer of a phosphate group to glutamate to form L-glutamate 5-phosphate. The protein is Glutamate 5-kinase of Pelagibacter ubique (strain HTCC1062).